Here is a 462-residue protein sequence, read N- to C-terminus: A-type ATP synthase subunit B (462 aa).

Belongs to the ATPase alpha/beta chains family. Has multiple subunits with at least A(3), B(3), C, D, E, F, H, I and proteolipid K(x).

It is found in the cell membrane. Component of the A-type ATP synthase that produces ATP from ADP in the presence of a proton gradient across the membrane. The B chain is a regulatory subunit. The protein is A-type ATP synthase subunit B of Pyrococcus furiosus (strain ATCC 43587 / DSM 3638 / JCM 8422 / Vc1).